A 451-amino-acid chain; its full sequence is POC1 centriolar protein homolog B (451 aa).

WD repeat units follow at residues 16–55 (GHKA…RAYR), 58–99 (GHKD…SEFK), 101–139 (HTAP…FLYS), 142–181 (RHTH…CVNN), 183–223 (SDSV…LLQH), 226–265 (VHSG…LIYT), and 268–307 (GHTG…LHCK). A Phosphoserine modification is found at serine 321. A disordered region spans residues 372 to 394 (PECSPTTTKKKTEDMSDLPSESQ). The stretch at 404-443 (ALEHIMEQLNVLTQTVSILEQRLTLTEDKLKDCLENQQKL) forms a coiled coil.

This sequence belongs to the WD repeat POC1 family. Interacts with POC1A. Interacts with FAM161A. Interacts with CEP44; the interaction is direct and recruits POC1B to centriolar microtubules. Forms a microtubule-associated complex with POC5, CETN2 and FAM161A. Interacts with CCDC15. Post-translationally, phosphorylated in mitotic cells that may be mediated by CDK1.

The protein localises to the cytoplasm. It is found in the cytoskeleton. Its subcellular location is the microtubule organizing center. The protein resides in the centrosome. It localises to the centriole. The protein localises to the cilium basal body. It is found in the spindle pole. In terms of biological role, plays an important role in centriole assembly and/or stability and ciliogenesis. Involved in early steps of centriole duplication, as well as in the later steps of centriole length control. Acts in concert with POC1A to ensure centriole integrity and proper mitotic spindle formation. Required for primary cilia formation, ciliary length and also cell proliferation. Required for retinal integrity. Acts as a positive regulator of centriole elongation. The polypeptide is POC1 centriolar protein homolog B (POC1B) (Pongo abelii (Sumatran orangutan)).